The chain runs to 245 residues: 1-(5-phosphoribosyl)-5-[(5-phosphoribosylamino)methylideneamino] imidazole-4-carboxamide isomerase (245 aa).

The active-site Proton acceptor is Asp8. Asp129 serves as the catalytic Proton donor.

This sequence belongs to the HisA/HisF family.

Its subcellular location is the cytoplasm. It carries out the reaction 1-(5-phospho-beta-D-ribosyl)-5-[(5-phospho-beta-D-ribosylamino)methylideneamino]imidazole-4-carboxamide = 5-[(5-phospho-1-deoxy-D-ribulos-1-ylimino)methylamino]-1-(5-phospho-beta-D-ribosyl)imidazole-4-carboxamide. It participates in amino-acid biosynthesis; L-histidine biosynthesis; L-histidine from 5-phospho-alpha-D-ribose 1-diphosphate: step 4/9. The polypeptide is 1-(5-phosphoribosyl)-5-[(5-phosphoribosylamino)methylideneamino] imidazole-4-carboxamide isomerase (Sinorhizobium fredii (strain NBRC 101917 / NGR234)).